The chain runs to 148 residues: UPF0756 membrane protein YeaL (148 aa).

The next 4 membrane-spanning stretches (helical) occupy residues 14–34, 51–71, 86–106, and 112–132; these read ALGFISHNTTVAVSILVLIIV, LSIGIIILTIGVMAPIASGTL, LVAIAVGVIVSWLGGRGVTLM, and LVAGLLVGTVLGVALFRGVPV.

The protein belongs to the UPF0756 family.

The protein localises to the cell membrane. The polypeptide is UPF0756 membrane protein YeaL (Escherichia coli O157:H7).